The primary structure comprises 7913 residues: Nonribosomal peptide synthetase dtxS1 (7913 aa).

The interval 263–662 is adenylation 1; that stretch reads FEQRSRAHPN…GRNDNQVKIR (400 aa). In terms of domain architecture, Carrier 1 spans 789 to 865; that stretch reads QPLSEVEKQV…NVAGQARRTT (77 aa). The residue at position 826 (S826) is an O-(pantetheine 4'-phosphoryl)serine. The interval 903–1171 is condensation 1; sequence QDAFPCTSLQ…ITTVPVRIRL (269 aa). The segment at 1332-1740 is adenylation 2; sequence LETQAHSRPD…GRKDAQVKIR (409 aa). The Carrier 2 domain occupies 1865–1941; the sequence is QPRTKLERQL…NLAQATGTQG (77 aa). Residue S1902 is modified to O-(pantetheine 4'-phosphoryl)serine. Positions 1965 to 2249 are condensation 2; that stretch reads PAQLSPIQRL…FSTIFPVRVS (285 aa). An adenylation 3 region spans residues 2863-3255; that stretch reads LAQPHEPAIC…ARKDAQIKIR (393 aa). The 77-residue stretch at 3380-3456 folds into the Carrier 3 domain; sequence QPLSEAERKM…NVTHQAVAQL (77 aa). S3417 carries the post-translational modification O-(pantetheine 4'-phosphoryl)serine. Residues 3496 to 3761 are condensation 3; that stretch reads DAFPCTPLQE…FATLPLRVRL (266 aa). The adenylation 4 stretch occupies residues 3924 to 4321; the sequence is DRVRIHPNAP…GRKDDQVKLR (398 aa). Over residues 4439-4450 the composition is skewed to polar residues; that stretch reads ELAQARTAQQGP. A disordered region spans residues 4439-4459; it reads ELAQARTAQQGPKRQPASEAE. The region spanning 4453–4529 is the Carrier 4 domain; sequence QPASEAERQM…EAATQAQMLG (77 aa). The residue at position 4490 (S4490) is an O-(pantetheine 4'-phosphoryl)serine. The interval 4545–4837 is condensation 4; that stretch reads QSFAQARLWF…VNMQCLRVKI (293 aa). Residues 5006 to 5405 are adenylation 5; it reads FRQQVAACAD…RRMDAQVKIR (400 aa). The 77-residue stretch at 5933 to 6009 folds into the Carrier 5 domain; that stretch reads QPTSKTQRQL…DMAEGLPLAK (77 aa). An O-(pantetheine 4'-phosphoryl)serine modification is found at S5970. Residues 6023-6315 form a condensation 5 region; the sequence is VEQSFAQRRL…VNMQCIRIRV (293 aa). Residues 6481–6766 are adenylation 6; sequence FRQQALLNPD…IINAYGPTEN (286 aa). The Carrier 6 domain maps to 7394-7470; the sequence is QPTTDMEREM…DLACHLSPEE (77 aa). S7431 carries the O-(pantetheine 4'-phosphoryl)serine modification. The tract at residues 7501 to 7771 is condensation 6; the sequence is EDVLPLTSFQ…CLNIVPIRVN (271 aa).

The protein belongs to the NRP synthetase family.

It functions in the pathway secondary metabolite biosynthesis. In terms of biological role, nonribosomal peptide synthetase; part of the gene cluster that mediates the biosynthesis of destruxins, insecticidal cyclic hexadepsipeptides which induce flaccid paralysis and visceral muscle contraction in insects through targeting the calcium channels and vacuolar-type ATPases. The aldo-keto reductase dtxS3 converts alpha-ketoisocaproic acid from deaminated leucine into alpha-hydroxyisocaproic acid (HIC), which is the first substrate for destruxin assembly by dtxS1. L-aspartate decarboxylase dtxS4 converts aspartic acid into beta-alanine, the last substrate for the destruxin assembly line performed by dtxS1. The nonribosomal peptide synthetase dtxS1 synthesizes destruxins B and B2, whereas the cytochrome P450 monooxygenase dtxS2 is required to convert destruxin B into other destruxin derivatives, including destructins C, D, A and E. Destruxin E-diol (ED) is further produced in a non-enzymatic manner from destruxin E. Destruxins play an important role in virulence and escape from insect host immune defenses. The chain is Nonribosomal peptide synthetase dtxS1 from Metarhizium robertsii (strain ARSEF 23 / ATCC MYA-3075) (Metarhizium anisopliae (strain ARSEF 23)).